A 76-amino-acid polypeptide reads, in one-letter code: MAMTQVFVIFILLATSLCNSNALPSSVINGFGYDYCIVECSITFLDDACKPLCIDRGYSDGGCIGLSPHFKCCCKK.

The N-terminal stretch at 1–22 is a signal peptide; the sequence is MAMTQVFVIFILLATSLCNSNA. 4 disulfides stabilise this stretch: Cys36–Cys74, Cys40–Cys63, Cys49–Cys72, and Cys53–Cys73.

This sequence belongs to the DEFL family.

The protein localises to the secreted. In Arabidopsis thaliana (Mouse-ear cress), this protein is Defensin-like protein 71 (LCR84).